The chain runs to 169 residues: Ureidoglycolate lyase (169 aa).

The protein belongs to the ureidoglycolate lyase family. In terms of assembly, homodimer. Ni(2+) serves as cofactor.

The enzyme catalyses (S)-ureidoglycolate = urea + glyoxylate. It functions in the pathway nitrogen metabolism; (S)-allantoin degradation. Catalyzes the catabolism of the allantoin degradation intermediate (S)-ureidoglycolate, generating urea and glyoxylate. Involved in the utilization of allantoin as nitrogen source. This chain is Ureidoglycolate lyase, found in Brucella abortus biovar 1 (strain 9-941).